A 344-amino-acid polypeptide reads, in one-letter code: Heat-inducible transcription repressor HrcA (344 aa).

Belongs to the HrcA family.

Its function is as follows. Negative regulator of class I heat shock genes (grpE-dnaK-dnaJ and groELS operons). Prevents heat-shock induction of these operons. The sequence is that of Heat-inducible transcription repressor HrcA from Streptococcus agalactiae serotype Ia (strain ATCC 27591 / A909 / CDC SS700).